A 476-amino-acid chain; its full sequence is Bifunctional protein HldE (476 aa).

Positions 1–319 are ribokinase; sequence MKISLPAFEK…AALNLSHGES (319 aa). Position 195-198 (195-198) interacts with ATP; that stretch reads NMSE. Residue aspartate 264 is part of the active site. The tract at residues 345–476 is cytidylyltransferase; sequence MTNGCFDILH…AIIENIMAKQ (132 aa).

The protein in the N-terminal section; belongs to the carbohydrate kinase PfkB family. It in the C-terminal section; belongs to the cytidylyltransferase family. As to quaternary structure, homodimer.

The catalysed reaction is D-glycero-beta-D-manno-heptose 7-phosphate + ATP = D-glycero-beta-D-manno-heptose 1,7-bisphosphate + ADP + H(+). It carries out the reaction D-glycero-beta-D-manno-heptose 1-phosphate + ATP + H(+) = ADP-D-glycero-beta-D-manno-heptose + diphosphate. Its pathway is nucleotide-sugar biosynthesis; ADP-L-glycero-beta-D-manno-heptose biosynthesis; ADP-L-glycero-beta-D-manno-heptose from D-glycero-beta-D-manno-heptose 7-phosphate: step 1/4. It participates in nucleotide-sugar biosynthesis; ADP-L-glycero-beta-D-manno-heptose biosynthesis; ADP-L-glycero-beta-D-manno-heptose from D-glycero-beta-D-manno-heptose 7-phosphate: step 3/4. In terms of biological role, catalyzes the phosphorylation of D-glycero-D-manno-heptose 7-phosphate at the C-1 position to selectively form D-glycero-beta-D-manno-heptose-1,7-bisphosphate. Catalyzes the ADP transfer from ATP to D-glycero-beta-D-manno-heptose 1-phosphate, yielding ADP-D-glycero-beta-D-manno-heptose. This is Bifunctional protein HldE from Shewanella loihica (strain ATCC BAA-1088 / PV-4).